The primary structure comprises 411 residues: Meiotic driver wtf33 (411 aa).

The interval 1 to 95 (MKNKYYPLRS…ENHSSGTADN (95 aa)) is disordered. The span at 11–29 (SMDELSTKNDNEIDLEKGP) shows a compositional bias: basic and acidic residues. The segment covering 57-72 (GANNPNLFNTDESTTP) has biased composition (polar residues). 6 helical membrane-spanning segments follow: residues 104-124 (AILSFIPIFVLNVSAVCYLTY), 137-157 (WVYFGMWCASCLMILISLWCF), 244-264 (EMMIIIWILWLIICCILFGCV), 281-301 (TISAVLFLIVSSVCIPIWTLW), 303-323 (ALSGMLQVLGIHGIIAVLVNG), and 336-356 (GYEIEGFVLFFTSSALFLYEM).

It belongs to the WTF family. Homomer. Forms protein aggregates. The two isoforms can interact with each other and with themselves. High sequence similarity is required for their interaction.

It localises to the spore membrane. Its subcellular location is the vacuole membrane. It is found in the ascus epiplasm. The protein localises to the cytoplasm. The protein resides in the endoplasmic reticulum membrane. Functionally, promotes unequal transmission of alleles from the parental zygote to progeny spores by acting as poison/antidote system where the poison and antidote proteins are produced from the same locus; the poison component is trans-acting and targets all spores within an ascus whereas the antidote component is spore-specific, leading to poisoning of all progeny that do not inherit the allele. In terms of biological role, localizes isoform 2 to the vacuole thereby facilitating its degradation. Forms toxic aggregates that disrupt spore maturation. The polypeptide is Meiotic driver wtf33 (Schizosaccharomyces kambucha (Fission yeast)).